A 257-amino-acid chain; its full sequence is Phycoerythrobilin:ferredoxin oxidoreductase (257 aa).

The protein belongs to the HY2 family.

It catalyses the reaction (3Z)-phycoerythrobilin + oxidized 2[4Fe-4S]-[ferredoxin] = 15,16-dihydrobiliverdin + reduced 2[4Fe-4S]-[ferredoxin] + 2 H(+). Functionally, catalyzes the two-electron reduction of the C2 and C3(1) diene system of 15,16-dihydrobiliverdin. This Prochlorococcus marinus (strain MIT 9303) protein is Phycoerythrobilin:ferredoxin oxidoreductase.